Reading from the N-terminus, the 429-residue chain is Ribosomal RNA small subunit methyltransferase B (429 aa).

S-adenosyl-L-methionine is bound by residues 254-260, D277, D303, and D322; that span reads CAGPGGK. Catalysis depends on C375, which acts as the Nucleophile.

It belongs to the class I-like SAM-binding methyltransferase superfamily. RsmB/NOP family.

The protein resides in the cytoplasm. It catalyses the reaction cytidine(967) in 16S rRNA + S-adenosyl-L-methionine = 5-methylcytidine(967) in 16S rRNA + S-adenosyl-L-homocysteine + H(+). In terms of biological role, specifically methylates the cytosine at position 967 (m5C967) of 16S rRNA. The polypeptide is Ribosomal RNA small subunit methyltransferase B (Escherichia coli O6:K15:H31 (strain 536 / UPEC)).